A 239-amino-acid chain; its full sequence is Ribosomal RNA small subunit methyltransferase G (239 aa).

S-adenosyl-L-methionine-binding positions include Gly77, Phe82, 128–129, and Arg146; that span reads AE. Residues 215–239 are disordered; the sequence is DKKRQTPKKYPRKPGTPNKTPLLEK.

Belongs to the methyltransferase superfamily. RNA methyltransferase RsmG family.

It localises to the cytoplasm. Functionally, specifically methylates the N7 position of guanine in position 535 of 16S rRNA. The sequence is that of Ribosomal RNA small subunit methyltransferase G from Staphylococcus aureus (strain USA300).